A 184-amino-acid polypeptide reads, in one-letter code: Ribosome maturation factor RimM (184 aa).

Residues 101–174 enclose the PRC barrel domain; it reads PDEYYDHQLV…RVVIADRPGL (74 aa).

Belongs to the RimM family. Binds ribosomal protein uS19.

It localises to the cytoplasm. Functionally, an accessory protein needed during the final step in the assembly of 30S ribosomal subunit, possibly for assembly of the head region. Essential for efficient processing of 16S rRNA. May be needed both before and after RbfA during the maturation of 16S rRNA. It has affinity for free ribosomal 30S subunits but not for 70S ribosomes. The protein is Ribosome maturation factor RimM of Nocardioides sp. (strain ATCC BAA-499 / JS614).